An 86-amino-acid chain; its full sequence is MIOREX complex component 7 (86 aa).

As to quaternary structure, associates with the mitochondrial ribosome.

The protein resides in the mitochondrion. In terms of biological role, component of MIOREX complexes, large expressome-like assemblies of ribosomes with factors involved in all the steps of post-transcriptional gene expression. This chain is MIOREX complex component 7, found in Saccharomyces cerevisiae (strain ATCC 204508 / S288c) (Baker's yeast).